The sequence spans 263 residues: MQLLTVTKPMFIPFIVAGDPRPDITIELALTLQEAGADILELGVPYSDPLADGPIIQRAAKRALRQQMTLKKAIELVPEMRKKGVKIPIILFTYYNPVLQLGEESFFALARKNEVNGILIPDLPFEESELIRKLGEATGIPLISLVAPTSKKRIEMIASNAQGFLYCVSSLGVTGVRDTLPETLNDFLTEVKRHSRVPVVVGFGISTSEQVSMLKNYCDGVVIGSALVQKIEQLNDLLQTEEKKEEALAEFRRYARSLTAPLR.

Active-site proton acceptor residues include glutamate 41 and aspartate 52.

This sequence belongs to the TrpA family. Tetramer of two alpha and two beta chains.

The enzyme catalyses (1S,2R)-1-C-(indol-3-yl)glycerol 3-phosphate + L-serine = D-glyceraldehyde 3-phosphate + L-tryptophan + H2O. Its pathway is amino-acid biosynthesis; L-tryptophan biosynthesis; L-tryptophan from chorismate: step 5/5. In terms of biological role, the alpha subunit is responsible for the aldol cleavage of indoleglycerol phosphate to indole and glyceraldehyde 3-phosphate. The sequence is that of Tryptophan synthase alpha chain from Geobacillus sp. (strain WCH70).